The chain runs to 486 residues: MEPYALTIHEARQLLDKKEISSVELTRSVFDRIERVEPKVGAYITLARESALSAAAAADTRLQSGGIAPLTGIPLAVKDLICTTGLRTTCASRMLETFMPPYDATVIEKLKTQGAVITGKVNMDEFAMGSSTEHSALGSTKNPWNLACIPGGSSGGSAASVAADMCLGSLGSDTGGSIRQPASHCGVVGIKPTYGRVSRYGLVAFASSLDQIGVLAKDVTDSALLLSAISGHDPSDSTSVPREVPDYAASCEKGLSGLTIGVCREYINAEGLDPEVADTVNRSIEHMKAQGAACVEVSLPHAQYAVAAYYVIAPAEASSNLARYDGVKYGFRDPEADSLLEMYARTRSRGFGKEVQRRIIIGTYCLSSGYYDAYYRKASQVRSLIADDFKKAFETCDVIVSPVAPTPAFELGAKTEDPLTMYLSDIFTLSANLAGVPGMSVPGGFSSTGLPIGVQLIAGHFNEPALVRCAWNLEQAVNIANKKPAL.

Active-site charge relay system residues include lysine 78 and serine 153. Residue serine 177 is the Acyl-ester intermediate of the active site.

This sequence belongs to the amidase family. GatA subfamily. Heterotrimer of A, B and C subunits.

The enzyme catalyses L-glutamyl-tRNA(Gln) + L-glutamine + ATP + H2O = L-glutaminyl-tRNA(Gln) + L-glutamate + ADP + phosphate + H(+). In terms of biological role, allows the formation of correctly charged Gln-tRNA(Gln) through the transamidation of misacylated Glu-tRNA(Gln) in organisms which lack glutaminyl-tRNA synthetase. The reaction takes place in the presence of glutamine and ATP through an activated gamma-phospho-Glu-tRNA(Gln). This chain is Glutamyl-tRNA(Gln) amidotransferase subunit A, found in Desulfosudis oleivorans (strain DSM 6200 / JCM 39069 / Hxd3) (Desulfococcus oleovorans).